The sequence spans 400 residues: Nucleoside permease NupC (400 aa).

The Cytoplasmic portion of the chain corresponds to 1 to 3 (MDR). A helical membrane pass occupies residues 4–24 (VLHFVLALAVVAILALLVSSD). The Periplasmic portion of the chain corresponds to 25–36 (RKKIRIRYVIQL). A helical transmembrane segment spans residues 37-57 (LVIEVLLAWFFLNSDVGLGFV). The Cytoplasmic segment spans residues 58–86 (KGFSEMFEKLLGFANEGTNFVFGSMNDQG). Residues 87–107 (LAFFFLKVLCPIVFISALIGI) traverse the membrane as a helical segment. The Periplasmic segment spans residues 108-168 (LQHIRVLPVI…GKISRNRMYT (61 aa)). The helical transmembrane segment at 169–189 (MAATAMSTVSMSIVGAYMTML) threads the bilayer. Over 190-192 (EPK) the chain is Cytoplasmic. Residues 193–213 (YVVAALVLNMFSTFIVLSLIN) form a helical membrane-spanning segment. At 214–250 (PYRVDASEENIQMSNLHEGQSFFEMLGEYILAGFKVA) the chain is on the periplasmic side. The chain crosses the membrane as a helical span at residues 251–271 (IIVAAMLIGFIALIAALNALF). At 272–281 (ATVTGWFGYS) the chain is on the cytoplasmic side. Residues 282-302 (ISFQGILGYIFYPIAWVMGVP) form a helical membrane-spanning segment. Residues 303 to 341 (SSEALQVGSIMATKLVSNEFVAMMDLQKIASTLSPRAEG) lie on the Periplasmic side of the membrane. The chain crosses the membrane as a helical span at residues 342-362 (IISVFLVSFANFSSIGIIAGA). Topologically, residues 363–378 (VKGLNEEQGNVVSRFG) are cytoplasmic. Residues 379–399 (LKLVYGSTLVSVLSASIAALV) traverse the membrane as a helical segment. A topological domain (periplasmic) is located at residue Leu-400.

It belongs to the concentrative nucleoside transporter (CNT) (TC 2.A.41) family.

It localises to the cell inner membrane. It carries out the reaction adenosine(in) + H(+)(in) = adenosine(out) + H(+)(out). The enzyme catalyses uridine(in) + H(+)(in) = uridine(out) + H(+)(out). The catalysed reaction is thymidine(in) + H(+)(in) = thymidine(out) + H(+)(out). It catalyses the reaction cytidine(in) + H(+)(in) = cytidine(out) + H(+)(out). It carries out the reaction 2'-deoxycytidine(in) + H(+)(in) = 2'-deoxycytidine(out) + H(+)(out). Transport is inhibited by the proton uncoupler dinitrophenol. Inhibited by the nucleoside antibiotic showdomycin. Nucleoside transport protein that can transport adenosine, uridine, thymidine, cytidine and deoxycytidine. Shows weak activity with inosine and xanthosine. Transport is driven by a proton motive force. Does not transport guanosine, deoxyguanosine, hypoxanthine or uracil. Also shows activity with the chemotherapeutic drugs 3'-azido-3'-deoxythymidine (AZT), 2',3'- dideoxycytidine (ddC) and 2'-deoxy-2',2'-difluorocytidine (gemcitabine). This Escherichia coli (strain K12) protein is Nucleoside permease NupC.